The following is a 39-amino-acid chain: Omega-theraphotoxin-Asp1g (39 aa).

3 disulfides stabilise this stretch: Cys-4–Cys-25, Cys-8–Cys-31, and Cys-17–Cys-36.

Belongs to the neurotoxin 12 (Hwtx-2) family. 06 (TXP1) subfamily. As to expression, expressed by the venom gland.

The protein resides in the secreted. Functionally, inhibits voltage-gated calcium channels (Cav) in rat cerebellar granule cells. Has insecticidal activity. The chain is Omega-theraphotoxin-Asp1g from Aphonopelma sp. (American tarantula).